The chain runs to 173 residues: Pathogenesis-related protein 1C (173 aa).

The first 20 residues, Met-1–Ala-20, serve as a signal peptide directing secretion.

The protein belongs to the thaumatin family.

This is Pathogenesis-related protein 1C from Hordeum vulgare (Barley).